The chain runs to 481 residues: Glycosyl hydrolase family 109 protein 1 (481 aa).

A signal peptide (tat-type signal) is located at residues 1–29 (MDNSSSRRRFLQTLGLATGALAAGSFANA). NAD(+) is bound by residues 84-85 (ER), Asp-106, 155-158 (WEWH), 175-176 (EV), and Asn-204. Substrate is bound by residues Tyr-233, Arg-252, 264–267 (YPTH), and Tyr-347. Tyr-264 contributes to the NAD(+) binding site.

The protein belongs to the Gfo/Idh/MocA family. Glycosyl hydrolase 109 subfamily. NAD(+) is required as a cofactor. Predicted to be exported by the Tat system. The position of the signal peptide cleavage has not been experimentally proven.

In terms of biological role, glycosidase. This is Glycosyl hydrolase family 109 protein 1 from Akkermansia muciniphila (strain ATCC BAA-835 / DSM 22959 / JCM 33894 / BCRC 81048 / CCUG 64013 / CIP 107961 / Muc).